A 364-amino-acid chain; its full sequence is Coproporphyrin III ferrochelatase (364 aa).

The Fe-coproporphyrin III site is built by Arg29 and Tyr118. Fe(2+) is bound by residues His169 and Glu250.

Belongs to the ferrochelatase family.

The protein resides in the cytoplasm. The catalysed reaction is Fe-coproporphyrin III + 2 H(+) = coproporphyrin III + Fe(2+). It participates in porphyrin-containing compound metabolism; protoheme biosynthesis. Functionally, involved in coproporphyrin-dependent heme b biosynthesis. Catalyzes the insertion of ferrous iron into coproporphyrin III to form Fe-coproporphyrin III. The chain is Coproporphyrin III ferrochelatase from Streptococcus pneumoniae (strain 70585).